We begin with the raw amino-acid sequence, 185 residues long: MSSRFLLQLLGFWLLLSQPCRTRVSEEWMDGFIRMCGREYARELIKICGASVGRLALSQEEPALLARQATEVVPSFINKDAEPFDTTLKCLPNLSEELKAVLSEAQASLPELQHAPVLSDSVVSLEGFKKTLHDRLGEAEDGSPPGLKYLQSDTHSRKKRESGGLMSQQCCHVGCSRRSIAKLYC.

An N-terminal signal peptide occupies residues 1–22 (MSSRFLLQLLGFWLLLSQPCRT). Cystine bridges form between cysteine 36/cysteine 171, cysteine 48/cysteine 185, and cysteine 170/cysteine 175. The propeptide at 58–156 (SQEEPALLAR…LKYLQSDTHS (99 aa)) is connecting peptide. Residues 135-161 (RLGEAEDGSPPGLKYLQSDTHSRKKRE) are disordered.

The protein belongs to the insulin family. In terms of assembly, heterodimer of a B chain and an A chain linked by two disulfide bonds.

It is found in the secreted. Relaxin is an ovarian hormone that acts with estrogen to produce dilatation of the birth canal in many mammals. This is Prorelaxin 1 (Rln1) from Mus musculus (Mouse).